A 64-amino-acid polypeptide reads, in one-letter code: Beta-defensin 5 (64 aa).

A signal peptide spans 1–23 (MKIHYLLFAFLLVLLSPLAGVFS). Disulfide bonds link C32–C60, C39–C53, and C43–C61.

It belongs to the beta-defensin family.

Its subcellular location is the secreted. Its function is as follows. Has antibacterial activity. This Mus musculus (Mouse) protein is Beta-defensin 5 (Defb5).